Reading from the N-terminus, the 171-residue chain is Lipoprotein signal peptidase (171 aa).

3 consecutive transmembrane segments (helical) span residues 8–28 (SFLWLSAVAFVIDLLTKYIVV), 64–84 (WQQYFFILLALAISGMLVYFL), and 99–119 (ALIIGGALANMVDRAYNGFVV). Residues aspartate 120 and aspartate 138 contribute to the active site. Residues 133–153 (VFNIADIAICIGAGLLVLDAF) form a helical membrane-spanning segment.

This sequence belongs to the peptidase A8 family.

The protein resides in the cell inner membrane. It carries out the reaction Release of signal peptides from bacterial membrane prolipoproteins. Hydrolyzes -Xaa-Yaa-Zaa-|-(S,diacylglyceryl)Cys-, in which Xaa is hydrophobic (preferably Leu), and Yaa (Ala or Ser) and Zaa (Gly or Ala) have small, neutral side chains.. Its pathway is protein modification; lipoprotein biosynthesis (signal peptide cleavage). This protein specifically catalyzes the removal of signal peptides from prolipoproteins. The polypeptide is Lipoprotein signal peptidase (Haemophilus influenzae (strain ATCC 51907 / DSM 11121 / KW20 / Rd)).